A 186-amino-acid polypeptide reads, in one-letter code: Iodotyrosine deiodinase (186 aa).

Residues 11 to 15 (RKTVR), 38 to 39 (PS), and Ser-39 contribute to the FMN site. 3-iodo-L-tyrosine contacts are provided by Met-41, Glu-68, Tyr-72, and Lys-92. L-tyrosine contacts are provided by Met-41, Glu-68, Tyr-72, and Lys-92. FMN is bound at residue Arg-176.

The protein belongs to the nitroreductase family. Homodimer. Requires FMN as cofactor.

It catalyses the reaction 2 iodide + L-tyrosine + 2 NADP(+) = 3,5-diiodo-L-tyrosine + 2 NADPH + H(+). The catalysed reaction is iodide + L-tyrosine + NADP(+) = 3-iodo-L-tyrosine + NADPH. The enzyme catalyses 3-iodo-L-tyrosine + iodide + NADP(+) = 3,5-diiodo-L-tyrosine + NADPH + H(+). It carries out the reaction L-tyrosine + chloride + NADP(+) = 3-chloro-L-tyrosine + NADPH. It catalyses the reaction bromide + L-tyrosine + NADP(+) = 3-bromo-L-tyrosine + NADPH. Catalyzes the dehalogenation of halotyrosines such as 3-bromo-L-tyrosine, 3-chloro-L-tyrosine, 3-iodo-L-tyrosine and 3,5-diiodo-L-tyrosine. Activity towards 2-iodophenol is weak. This Thermotoga neapolitana (strain ATCC 49049 / DSM 4359 / NBRC 107923 / NS-E) protein is Iodotyrosine deiodinase.